Here is a 211-residue protein sequence, read N- to C-terminus: Imidazole glycerol phosphate synthase subunit HisH (211 aa).

Residues 3 to 211 (VIAVVDYEMG…VAQVREKIPA (209 aa)) enclose the Glutamine amidotransferase type-1 domain. C81 serves as the catalytic Nucleophile. Active-site residues include H186 and E188.

In terms of assembly, heterodimer of HisH and HisF.

Its subcellular location is the cytoplasm. It carries out the reaction 5-[(5-phospho-1-deoxy-D-ribulos-1-ylimino)methylamino]-1-(5-phospho-beta-D-ribosyl)imidazole-4-carboxamide + L-glutamine = D-erythro-1-(imidazol-4-yl)glycerol 3-phosphate + 5-amino-1-(5-phospho-beta-D-ribosyl)imidazole-4-carboxamide + L-glutamate + H(+). It catalyses the reaction L-glutamine + H2O = L-glutamate + NH4(+). It participates in amino-acid biosynthesis; L-histidine biosynthesis; L-histidine from 5-phospho-alpha-D-ribose 1-diphosphate: step 5/9. Its function is as follows. IGPS catalyzes the conversion of PRFAR and glutamine to IGP, AICAR and glutamate. The HisH subunit catalyzes the hydrolysis of glutamine to glutamate and ammonia as part of the synthesis of IGP and AICAR. The resulting ammonia molecule is channeled to the active site of HisF. In Nostoc punctiforme (strain ATCC 29133 / PCC 73102), this protein is Imidazole glycerol phosphate synthase subunit HisH.